The chain runs to 473 residues: Glutathione reductase, mitochondrial (473 aa).

Ser-30 and Gly-31 together coordinate FAD. Glutathione is bound at residue Ser-30. Glutathione is bound at residue Arg-37. Glu-50, Thr-57, Cys-58, and Lys-66 together coordinate FAD. An intrachain disulfide couples Cys-58 to Cys-63. Glutathione is bound at residue Tyr-114. Ala-130 provides a ligand contact to FAD. Residues Ala-190, Ile-193, Glu-196, Arg-213, Arg-219, and Gly-279 each contribute to the NADP(+) site. An FAD-binding site is contributed by Asp-320. Residue Leu-326 coordinates NADP(+). Thr-328 lines the FAD pocket. A glutathione-binding site is contributed by Arg-336. Residue Val-359 participates in NADP(+) binding. Residue His-456 participates in FAD binding. The Proton acceptor role is filled by His-456.

The protein belongs to the class-I pyridine nucleotide-disulfide oxidoreductase family. FAD serves as cofactor. Expressed at all larval stages and in adults in intestine, vulva muscle, pharynx and some cells in the tail.

It localises to the cytoplasm. The protein resides in the mitochondrion. The catalysed reaction is 2 glutathione + NADP(+) = glutathione disulfide + NADPH + H(+). Catalyzes the reduction of glutathione disulfide (GSSG) to reduced glutathione (GSH). Constitutes the major mechanism to maintain a high GSH:GSSG ratio in the cytosol. Involved in resistance to oxidative stress and starvation. Together with thioredoxin reductase txtr-1, required for the reduction of disulfide groups in the cuticle during molting. This chain is Glutathione reductase, mitochondrial, found in Caenorhabditis elegans.